The chain runs to 342 residues: S-adenosylmethionine:tRNA ribosyltransferase-isomerase (342 aa).

It belongs to the QueA family. Monomer.

It localises to the cytoplasm. The enzyme catalyses 7-aminomethyl-7-carbaguanosine(34) in tRNA + S-adenosyl-L-methionine = epoxyqueuosine(34) in tRNA + adenine + L-methionine + 2 H(+). Its pathway is tRNA modification; tRNA-queuosine biosynthesis. Transfers and isomerizes the ribose moiety from AdoMet to the 7-aminomethyl group of 7-deazaguanine (preQ1-tRNA) to give epoxyqueuosine (oQ-tRNA). The protein is S-adenosylmethionine:tRNA ribosyltransferase-isomerase of Streptococcus agalactiae serotype V (strain ATCC BAA-611 / 2603 V/R).